The chain runs to 88 residues: Large ribosomal subunit protein bL27 (88 aa).

The interval 1–22 (MAHKKGASSSRNGRDSNAQRLG) is disordered. The segment covering 7–19 (ASSSRNGRDSNAQ) has biased composition (polar residues).

It belongs to the bacterial ribosomal protein bL27 family.

This is Large ribosomal subunit protein bL27 from Mycolicibacterium gilvum (strain PYR-GCK) (Mycobacterium gilvum (strain PYR-GCK)).